Consider the following 354-residue polypeptide: Histone-lysine N-methyltransferase SUVR3 (354 aa).

In terms of domain architecture, Pre-SET spans 143 to 188; it reads SGCECERCEEGYCKCLAFAGMEEIANECGSGCGCGSDCSNRVTQKG. Zn(2+) is bound by residues Cys-145, Cys-147, Cys-150, Cys-155, Cys-157, Cys-170, Cys-174, Cys-176, and Cys-180. In terms of domain architecture, SET spans 191 to 323; sequence VSLKIVRDEK…AEEELSFSYG (133 aa). Residues 201 to 203 and 281 to 282 each bind S-adenosyl-L-methionine; these read KGW and NH. Position 284 (Cys-284) interacts with Zn(2+). S-adenosyl-L-methionine is bound at residue Tyr-322. The Post-SET domain occupies 334–350; sequence DKLNCSCGSSCCLGTLP. Residues Cys-338, Cys-340, and Cys-345 each contribute to the Zn(2+) site.

The protein belongs to the class V-like SAM-binding methyltransferase superfamily.

The protein resides in the nucleus. It is found in the chromosome. The catalysed reaction is L-lysyl-[histone] + S-adenosyl-L-methionine = N(6)-methyl-L-lysyl-[histone] + S-adenosyl-L-homocysteine + H(+). Its function is as follows. Histone methyltransferase. The protein is Histone-lysine N-methyltransferase SUVR3 (SUVR3) of Arabidopsis thaliana (Mouse-ear cress).